The primary structure comprises 395 residues: Elongation factor Tu (395 aa).

In terms of domain architecture, tr-type G spans 10–204 (KPHCNIGTIG…TVDSYIPDPQ (195 aa)). Residues 19–26 (GHVDHGKT) form a G1 region. 19–26 (GHVDHGKT) lines the GTP pocket. Residue Thr-26 coordinates Mg(2+). The interval 61–65 (GITIS) is G2. Residues 82-85 (DCPG) are G3. Residues 82-86 (DCPGH) and 137-140 (NKCD) each bind GTP. The tract at residues 137-140 (NKCD) is G4. Residues 173–175 (SAL) form a G5 region.

Belongs to the TRAFAC class translation factor GTPase superfamily. Classic translation factor GTPase family. EF-Tu/EF-1A subfamily. Monomer.

Its subcellular location is the cytoplasm. The catalysed reaction is GTP + H2O = GDP + phosphate + H(+). Its function is as follows. GTP hydrolase that promotes the GTP-dependent binding of aminoacyl-tRNA to the A-site of ribosomes during protein biosynthesis. This is Elongation factor Tu from Agathobacter rectalis (strain ATCC 33656 / DSM 3377 / JCM 17463 / KCTC 5835 / VPI 0990) (Eubacterium rectale).